The sequence spans 331 residues: Tetraacyldisaccharide 4'-kinase (331 aa).

60–67 (TVGGTGKT) provides a ligand contact to ATP.

The protein belongs to the LpxK family.

The enzyme catalyses a lipid A disaccharide + ATP = a lipid IVA + ADP + H(+). It functions in the pathway glycolipid biosynthesis; lipid IV(A) biosynthesis; lipid IV(A) from (3R)-3-hydroxytetradecanoyl-[acyl-carrier-protein] and UDP-N-acetyl-alpha-D-glucosamine: step 6/6. Its function is as follows. Transfers the gamma-phosphate of ATP to the 4'-position of a tetraacyldisaccharide 1-phosphate intermediate (termed DS-1-P) to form tetraacyldisaccharide 1,4'-bis-phosphate (lipid IVA). The protein is Tetraacyldisaccharide 4'-kinase of Pseudomonas syringae pv. syringae (strain B728a).